A 196-amino-acid polypeptide reads, in one-letter code: NADH-quinone oxidoreductase subunit C (196 aa).

This sequence belongs to the complex I 30 kDa subunit family. In terms of assembly, NDH-1 is composed of 14 different subunits. Subunits NuoB, C, D, E, F, and G constitute the peripheral sector of the complex.

It is found in the cell inner membrane. The enzyme catalyses a quinone + NADH + 5 H(+)(in) = a quinol + NAD(+) + 4 H(+)(out). NDH-1 shuttles electrons from NADH, via FMN and iron-sulfur (Fe-S) centers, to quinones in the respiratory chain. The immediate electron acceptor for the enzyme in this species is believed to be ubiquinone. Couples the redox reaction to proton translocation (for every two electrons transferred, four hydrogen ions are translocated across the cytoplasmic membrane), and thus conserves the redox energy in a proton gradient. This Rickettsia bellii (strain RML369-C) protein is NADH-quinone oxidoreductase subunit C.